The primary structure comprises 130 residues: MMQDPISDMLTRIRNAQAVRKKEVVMPRSKLKMSIANVLKEEGYIVDYREEGDLTKAQLVITLKYHEGESVISEIRRVSSPALQVYKSKDELPKVKNGLGIAIISTSKGVMSDRQARRLGEGGEVLCYVS.

Belongs to the universal ribosomal protein uS8 family. In terms of assembly, part of the 30S ribosomal subunit. Contacts proteins S5 and S12.

Functionally, one of the primary rRNA binding proteins, it binds directly to 16S rRNA central domain where it helps coordinate assembly of the platform of the 30S subunit. This is Small ribosomal subunit protein uS8 from Coxiella burnetii (strain RSA 331 / Henzerling II).